The following is a 255-amino-acid chain: 1-(5-phosphoribosyl)-5-[(5-phosphoribosylamino)methylideneamino] imidazole-4-carboxamide isomerase (255 aa).

The active-site Proton acceptor is the aspartate 8. The Proton donor role is filled by aspartate 129.

The protein belongs to the HisA/HisF family.

Its subcellular location is the cytoplasm. The catalysed reaction is 1-(5-phospho-beta-D-ribosyl)-5-[(5-phospho-beta-D-ribosylamino)methylideneamino]imidazole-4-carboxamide = 5-[(5-phospho-1-deoxy-D-ribulos-1-ylimino)methylamino]-1-(5-phospho-beta-D-ribosyl)imidazole-4-carboxamide. It functions in the pathway amino-acid biosynthesis; L-histidine biosynthesis; L-histidine from 5-phospho-alpha-D-ribose 1-diphosphate: step 4/9. The sequence is that of 1-(5-phosphoribosyl)-5-[(5-phosphoribosylamino)methylideneamino] imidazole-4-carboxamide isomerase from Prochlorococcus marinus (strain MIT 9301).